A 396-amino-acid chain; its full sequence is 1-deoxy-D-xylulose 5-phosphate reductoisomerase (396 aa).

Positions 13, 14, 15, 16, and 127 each coordinate NADPH. 1-deoxy-D-xylulose 5-phosphate is bound at residue Lys128. Glu129 contributes to the NADPH binding site. Asp153 is a binding site for Mn(2+). Residues Ser154, Glu155, Ser184, and His207 each coordinate 1-deoxy-D-xylulose 5-phosphate. Glu155 contributes to the Mn(2+) binding site. Gly213 is an NADPH binding site. Residues Ser220, Asn225, Lys226, and Glu229 each contribute to the 1-deoxy-D-xylulose 5-phosphate site. Glu229 provides a ligand contact to Mn(2+).

The protein belongs to the DXR family. The cofactor is Mg(2+). Requires Mn(2+) as cofactor.

The enzyme catalyses 2-C-methyl-D-erythritol 4-phosphate + NADP(+) = 1-deoxy-D-xylulose 5-phosphate + NADPH + H(+). The protein operates within isoprenoid biosynthesis; isopentenyl diphosphate biosynthesis via DXP pathway; isopentenyl diphosphate from 1-deoxy-D-xylulose 5-phosphate: step 1/6. Its function is as follows. Catalyzes the NADPH-dependent rearrangement and reduction of 1-deoxy-D-xylulose-5-phosphate (DXP) to 2-C-methyl-D-erythritol 4-phosphate (MEP). The sequence is that of 1-deoxy-D-xylulose 5-phosphate reductoisomerase from Pseudomonas fluorescens (strain SBW25).